The chain runs to 166 residues: Large ribosomal subunit protein uL10 (166 aa).

It belongs to the universal ribosomal protein uL10 family. In terms of assembly, part of the ribosomal stalk of the 50S ribosomal subunit. The N-terminus interacts with L11 and the large rRNA to form the base of the stalk. The C-terminus forms an elongated spine to which L12 dimers bind in a sequential fashion forming a multimeric L10(L12)X complex.

Forms part of the ribosomal stalk, playing a central role in the interaction of the ribosome with GTP-bound translation factors. In Shewanella oneidensis (strain ATCC 700550 / JCM 31522 / CIP 106686 / LMG 19005 / NCIMB 14063 / MR-1), this protein is Large ribosomal subunit protein uL10.